Reading from the N-terminus, the 351-residue chain is Anthranilate phosphoribosyltransferase (351 aa).

Residues Gly80, 83–84, Thr88, 90–93, 108–116, and Ser120 contribute to the 5-phospho-alpha-D-ribose 1-diphosphate site; these read GD, NIST, and KHGNRSVTS. Gly80 lines the anthranilate pocket. A Mg(2+)-binding site is contributed by Ser92. Residue Asn111 coordinates anthranilate. An anthranilate-binding site is contributed by Arg166. Residues Asp229 and Glu230 each coordinate Mg(2+).

The protein belongs to the anthranilate phosphoribosyltransferase family. As to quaternary structure, homodimer. Mg(2+) serves as cofactor.

It carries out the reaction N-(5-phospho-beta-D-ribosyl)anthranilate + diphosphate = 5-phospho-alpha-D-ribose 1-diphosphate + anthranilate. Its pathway is amino-acid biosynthesis; L-tryptophan biosynthesis; L-tryptophan from chorismate: step 2/5. Its function is as follows. Catalyzes the transfer of the phosphoribosyl group of 5-phosphorylribose-1-pyrophosphate (PRPP) to anthranilate to yield N-(5'-phosphoribosyl)-anthranilate (PRA). This chain is Anthranilate phosphoribosyltransferase, found in Pelodictyon phaeoclathratiforme (strain DSM 5477 / BU-1).